Consider the following 218-residue polypeptide: Large ribosomal subunit protein uL3 (218 aa).

The interval G127–G167 is disordered.

This sequence belongs to the universal ribosomal protein uL3 family. In terms of assembly, part of the 50S ribosomal subunit. Forms a cluster with proteins L14 and L19.

Its function is as follows. One of the primary rRNA binding proteins, it binds directly near the 3'-end of the 23S rRNA, where it nucleates assembly of the 50S subunit. The protein is Large ribosomal subunit protein uL3 of Prochlorococcus marinus (strain NATL1A).